Reading from the N-terminus, the 406-residue chain is ATP-dependent RNA helicase eIF4A (406 aa).

The Q motif motif lies at 25-53 (DSFDAMDLKPELLRGVYAYGFERPSAIQQ). The 171-residue stretch at 56–226 (ILPIIKGNDV…TKFMRDPVRI (171 aa)) folds into the Helicase ATP-binding domain. Position 69–76 (69–76 (AQSGTGKT)) interacts with ATP. The DEAD box signature appears at 174–177 (DEAD). The region spanning 237 to 398 (GIKQFYIAVE…EMPMNVAGKF (162 aa)) is the Helicase C-terminal domain.

It belongs to the DEAD box helicase family. eIF4A subfamily. In terms of assembly, component of the eIF4F complex, which composition varies with external and internal environmental conditions. It is composed of at least eIF4A, eIF4E and eIF4G.

The protein resides in the cytoplasm. The enzyme catalyses ATP + H2O = ADP + phosphate + H(+). Functionally, ATP-dependent RNA helicase which is a subunit of the eIF4F complex involved in cap recognition and is required for mRNA binding to ribosome. In the current model of translation initiation, eIF4A unwinds RNA secondary structures in the 5'-UTR of mRNAs which is necessary to allow efficient binding of the small ribosomal subunit, and subsequent scanning for the initiator codon. The polypeptide is ATP-dependent RNA helicase eIF4A (tif1) (Aspergillus fumigatus (strain ATCC MYA-4609 / CBS 101355 / FGSC A1100 / Af293) (Neosartorya fumigata)).